A 335-amino-acid chain; its full sequence is Putative type I specificity subunit S.MpnORF89P (335 aa).

Belongs to the type-I restriction system S methylase family. The methyltransferase is composed of M and S polypeptides.

In terms of biological role, the specificity (S) subunit of a type I methyltransferase (MTase); this subunit dictates DNA sequence specificity. The single R subunit has multiple frameshifts and is probably not expressed. In Mycoplasma pneumoniae (strain ATCC 29342 / M129 / Subtype 1) (Mycoplasmoides pneumoniae), this protein is Putative type I specificity subunit S.MpnORF89P.